We begin with the raw amino-acid sequence, 156 residues long: Ribosomal RNA large subunit methyltransferase H (156 aa).

S-adenosyl-L-methionine contacts are provided by residues Leu-73, Gly-104, and 123–128; that span reads LSSLTL.

Belongs to the RNA methyltransferase RlmH family. As to quaternary structure, homodimer.

It localises to the cytoplasm. It carries out the reaction pseudouridine(1915) in 23S rRNA + S-adenosyl-L-methionine = N(3)-methylpseudouridine(1915) in 23S rRNA + S-adenosyl-L-homocysteine + H(+). Specifically methylates the pseudouridine at position 1915 (m3Psi1915) in 23S rRNA. The protein is Ribosomal RNA large subunit methyltransferase H of Neisseria meningitidis serogroup C (strain 053442).